Reading from the N-terminus, the 99-residue chain is Putative septation protein SpoVG (99 aa).

This sequence belongs to the SpoVG family.

In terms of biological role, could be involved in septation. The polypeptide is Putative septation protein SpoVG (Aster yellows witches'-broom phytoplasma (strain AYWB)).